The sequence spans 548 residues: Glucose-6-phosphate isomerase 1 (548 aa).

Glutamate 353 (proton donor) is an active-site residue. Residues histidine 384 and lysine 512 contribute to the active site.

The protein belongs to the GPI family.

It localises to the cytoplasm. It carries out the reaction alpha-D-glucose 6-phosphate = beta-D-fructose 6-phosphate. Its pathway is carbohydrate biosynthesis; gluconeogenesis. The protein operates within carbohydrate degradation; glycolysis; D-glyceraldehyde 3-phosphate and glycerone phosphate from D-glucose: step 2/4. Catalyzes the reversible isomerization of glucose-6-phosphate to fructose-6-phosphate. The protein is Glucose-6-phosphate isomerase 1 of Neisseria gonorrhoeae (strain ATCC 700825 / FA 1090).